The following is a 217-amino-acid chain: 3,4-dihydroxy-2-butanone 4-phosphate synthase (217 aa).

Residues 37-38, Asp-42, 150-154, and Glu-174 contribute to the D-ribulose 5-phosphate site; these read RE and RRGHT. Glu-38 provides a ligand contact to Mg(2+). Mg(2+) is bound at residue His-153.

The protein belongs to the DHBP synthase family. As to quaternary structure, homodimer. It depends on Mg(2+) as a cofactor. Mn(2+) serves as cofactor.

It catalyses the reaction D-ribulose 5-phosphate = (2S)-2-hydroxy-3-oxobutyl phosphate + formate + H(+). It participates in cofactor biosynthesis; riboflavin biosynthesis; 2-hydroxy-3-oxobutyl phosphate from D-ribulose 5-phosphate: step 1/1. Catalyzes the conversion of D-ribulose 5-phosphate to formate and 3,4-dihydroxy-2-butanone 4-phosphate. This is 3,4-dihydroxy-2-butanone 4-phosphate synthase from Shewanella woodyi (strain ATCC 51908 / MS32).